The sequence spans 663 residues: Polyunsaturated fatty acid lipoxygenase ALOX15 (663 aa).

In terms of domain architecture, PLAT spans 2 to 115 (GVYRVCVSTG…VQSLPVGTGC (114 aa)). A Lipoxygenase domain is found at 116-663 (TTVGDPQGLF…PSIVENSVAI (548 aa)). Residues H361, H366, H541, H545, and I663 each contribute to the Fe cation site.

Belongs to the lipoxygenase family. In terms of assembly, interacts with PEBP1; in response to IL13/interleukin-13, prevents the interaction of PEBP1 with RAF1 to activate the ERK signaling cascade. It depends on Fe cation as a cofactor. As to expression, detected in reticulocytes (at protein level).

The protein localises to the cytoplasm. It localises to the cytosol. It is found in the cell membrane. Its subcellular location is the lipid droplet. It catalyses the reaction (5Z,8Z,11Z,14Z)-eicosatetraenoate + O2 = (12S)-hydroperoxy-(5Z,8Z,10E,14Z)-eicosatetraenoate. It carries out the reaction (5Z,8Z,11Z,14Z)-eicosatetraenoate + O2 = (15S)-hydroperoxy-(5Z,8Z,11Z,13E)-eicosatetraenoate. The enzyme catalyses (9Z,12Z)-octadecadienoate + O2 = (13S)-hydroperoxy-(9Z,11E)-octadecadienoate. The catalysed reaction is (5Z,8Z,11Z,14Z)-eicosatetraenoate + 2 O2 = (14R,15S)-dihydroperoxy-(5Z,8Z,10E,12E)-eicosatetraenoate. It catalyses the reaction (5Z,8Z,11Z,14Z)-eicosatetraenoate + 2 O2 = (8S,15S)-dihydroperoxy-(5Z,9E,11Z,13E)-eicosatetraenoate. It carries out the reaction (14S,15R)-epoxy-(5Z,8Z,11Z)-eicosatrienoate + O2 = (8S)-hydroperoxy-(14S,15R)-epoxy-(5Z,9E,11Z)-eicosatrienoate. The enzyme catalyses (14S,15R)-epoxy-(5Z,8Z,11Z)-eicosatrienoate + O2 = (12S)-hydroperoxy-(14S,15R)-epoxy-(5Z,8Z,10E)-eicosatrienoate. The catalysed reaction is (14R,15S)-epoxy-(5Z,8Z,11Z)-eicosatrienoate + O2 = (5S)-hydroperoxy-(14R,15S)-epoxy-(6E,8Z,11Z)-eicosatrienoate. It catalyses the reaction (14R,15S)-epoxy-(5Z,8Z,11Z)-eicosatrienoate + O2 = (12S)-hydroperoxy-(14R,15S)-epoxy-(5Z,8Z,10E)-eicosatrienoate. It carries out the reaction (15R)-hydroperoxy-(5Z,8Z,11Z,13E)-eicosatetraenoate = 15-oxo-(5Z,8Z,11Z,13E)-eicosatetraenoate + H2O. The enzyme catalyses (15S)-hydroperoxy-(5Z,8Z,11Z,13E)-eicosatetraenoate = (14S,15S)-epoxy-(5Z,8Z,10E,12E)-eicosatetraenoate + H2O. The catalysed reaction is (12S)-hydroperoxy-(5Z,8Z,10E,14Z)-eicosatetraenoate = (8S)-hydroxy-(11S,12S)-epoxy-(5Z,9E,14Z)-eicosatrienoate. It catalyses the reaction (4Z,7Z,10Z,13Z,16Z)-docosapentaenoate + O2 = 14-hydroperoxy-(4Z,7Z,10Z,12E,16Z)-docosapentaenoate. It carries out the reaction (7Z,10Z,13Z,16Z,19Z)-docosapentaenoate + O2 = 14-hydroperoxy-(7Z,10Z,12E,16Z,19Z)-docosapentaenoate. The enzyme catalyses (4Z,7Z,10Z,13Z,16Z,19Z)-docosahexaenoate + O2 = (14S)-hydroperoxy-(4Z,7Z,10Z,12E,16Z,19Z)-docosahexaenoate. The catalysed reaction is (4Z,7Z,10Z,13Z,16Z,19Z)-docosahexaenoate + O2 = (17S)-hydroperoxy-(4Z,7Z,10Z,13Z,15E,19Z)-docosahexaenoate. It catalyses the reaction (7S)-hydroperoxy-(4Z,8E,10Z,13Z,16Z,19Z)-docosahexaenoate + O2 = (7S,14S)-dihydroperoxy-(4Z,8E,10Z,12E,16Z,19Z)-docosahexaenoate. It carries out the reaction (7S)-hydroperoxy-(4Z,8E,10Z,13Z,16Z,19Z)-docosahexaenoate + O2 = (7S,17S)-dihydroperoxy-(4Z,8E,10Z,13Z,15E,19Z)-docosahexaenoate. The enzyme catalyses (4Z,7Z,10Z,13Z,16Z,19Z)-docosahexaenoate + O2 = (11S)-hydroperoxy-(4Z,7Z,9E,13Z,16Z,19Z)-docosahexaenoate. The catalysed reaction is N-(5Z,8Z,11Z,14Z)-eicosatetraenoyl-taurine + O2 = N-(15S)-hydroperoxy-(5Z,8Z,11Z,13E)-eicosatetraenoyl-taurine. It catalyses the reaction N-(5Z,8Z,11Z,14Z)-eicosatetraenoyl-gamma-aminobutanoate + O2 = N-(15S)-hydroperoxy-(5Z,8Z,11Z,13E)-eicosatetraenoyl-gamma-aminobutanoate. It carries out the reaction N-(5Z,8Z,11Z,14Z)-eicosatetraenoyl-glycine + O2 = N-(15S)-hydroperoxy-(5Z,8Z,11Z,13E)-eicosatetraenoyl-glycine. The enzyme catalyses N-(5Z,8Z,11Z,14Z)-eicosatetraenoyl-L-alanine + O2 = N-(15S)-hydroperoxy-(5Z,8Z,11Z,13E)-eicosatetraenoyl-alanine. The catalysed reaction is N-(5Z,8Z,11Z,14Z)-eicosatetraenoyl-taurine + O2 = N-(12S)-hydroperoxy-(5Z,8Z,10E,14Z)-eicosatetraenoyl-taurine. It catalyses the reaction N-(5Z,8Z,11Z,14Z)-eicosatetraenoyl-gamma-aminobutanoate + O2 = N-(12S)-hydroperoxy-(5Z,8Z,10E,14Z)-eicosatetraenoyl-gamma-aminobutanoate. It carries out the reaction N-(5Z,8Z,11Z,14Z)-eicosatetraenoyl-glycine + O2 = N-(12S)-hydroperoxy-(5Z,8Z,10E,14Z)-eicosatetraenoyl-glycine. The enzyme catalyses N-(5Z,8Z,11Z,14Z)-eicosatetraenoyl-L-alanine + O2 = N-(12S)-hydroperoxy-(5Z,8Z,10E,14Z)-eicosatetraenoyl-alanine. It participates in lipid metabolism; hydroperoxy eicosatetraenoic acid biosynthesis. Non-heme iron-containing dioxygenase that catalyzes the stereo-specific peroxidation of free and esterified polyunsaturated fatty acids generating a spectrum of bioactive lipid mediators. It inserts peroxyl groups at C12 or C15 of arachidonate ((5Z,8Z,11Z,14Z)-eicosatetraenoate) producing both 12-hydroperoxyeicosatetraenoate/12-HPETE and 15-hydroperoxyeicosatetraenoate/15-HPETE. It may then act on 12-HPETE to produce hepoxilins, which may show pro-inflammatory properties. Can also peroxidize linoleate ((9Z,12Z)-octadecadienoate) to 13-hydroperoxyoctadecadienoate. May participate in the sequential oxidations of DHA ((4Z,7Z,10Z,13Z,16Z,19Z)-docosahexaenoate) to generate specialized pro-resolving mediators (SPMs)like resolvin D5 ((7S,17S)-diHPDHA) and (7S,14S)-diHPDHA, that actively down-regulate the immune response and have anti-aggregation properties with platelets. Can convert epoxy fatty acids to hydroperoxy-epoxides derivatives followed by an intramolecular nucleophilic substitution leading to the formation of monocyclic endoperoxides. Plays an important role during the maintenance of self-tolerance by peroxidizing membrane-bound phosphatidylethanolamine which can then signal the sorting process for clearance of apoptotic cells during inflammation and prevent an autoimmune response. In addition to its role in the immune and inflammatory responses, this enzyme may play a role in epithelial wound healing in the cornea through production of lipoxin A4 (LXA(4)) and docosahexaenoic acid-derived neuroprotectin D1 (NPD1; 10R,17S-HDHA), both lipid autacoids exhibit anti-inflammatory and neuroprotective properties. Furthermore, it may regulate actin polymerization which is crucial for several biological processes such as the phagocytosis of apoptotic cells. It is also implicated in the generation of endogenous ligands for peroxisome proliferator activated receptor (PPAR-gamma), hence modulating macrophage development and function. It may also exert a negative effect on skeletal development by regulating bone mass through this pathway. As well as participates in ER stress and downstream inflammation in adipocytes, pancreatic islets, and liver. Finally, it is also involved in the cellular response to IL13/interleukin-13. The chain is Polyunsaturated fatty acid lipoxygenase ALOX15 from Oryctolagus cuniculus (Rabbit).